The sequence spans 35 residues: GFGSLFKFLAKKVAKTVAKQAAKQGAKYVANKHME.

Residue Glu-35 is modified to Glutamic acid 1-amide.

Belongs to the cationic peptide 04 (cupiennin) family. 01 subfamily. In terms of tissue distribution, expressed by the venom gland.

It localises to the secreted. In terms of biological role, has antimicrobial activity against B.subtilis, E.coli, E.faecalis, P.aeruginosa, and S.aureus. Has insecticidal and hemolytic activities. Probably acts by disturbing membrane function with its amphipathic structure. The polypeptide is Cupiennin-1d (Cupiennius salei (American wandering spider)).